The sequence spans 122 residues: Large ribosomal subunit protein uL14 (122 aa).

The protein belongs to the universal ribosomal protein uL14 family. As to quaternary structure, part of the 50S ribosomal subunit. Forms a cluster with proteins L3 and L19. In the 70S ribosome, L14 and L19 interact and together make contacts with the 16S rRNA in bridges B5 and B8.

Functionally, binds to 23S rRNA. Forms part of two intersubunit bridges in the 70S ribosome. This is Large ribosomal subunit protein uL14 from Buchnera aphidicola subsp. Schizaphis graminum (strain Sg).